The chain runs to 330 residues: Zinc finger Ran-binding domain-containing protein 2 (330 aa).

The residue at position 9 (Ser9) is a Phosphoserine. The RanBP2-type 1 zinc-finger motif lies at 9 to 40 (SDGDWICPDKKCGNVNFARRTSCNRCGREKTT). 3 positions are modified to N6-acetyllysine: Lys18, Lys54, and Lys92. Residues 65–94 (SANDWQCKTCSNVNWARRSECNMCNTPKYA) form a RanBP2-type 2 zinc finger. The disordered stretch occupies residues 117–330 (REESDGEYDE…SGSRSSSKKK (214 aa)). Phosphoserine occurs at positions 120, 153, 181, 188, and 193. Positions 150–163 (DKESEGEEEDEDED) are enriched in acidic residues. The tract at residues 151-324 (KESEGEEEDE…SSGSSHSGSR (174 aa)) is required for nuclear targeting. The span at 196-210 (KKSNRRSRSKSRSSH) shows a compositional bias: basic residues. 2 stretches are compositionally biased toward low complexity: residues 211-224 (SRSS…SSSR) and 232-242 (RSSSSSQSRSR). Basic residues-rich tracts occupy residues 251–273 (SRGS…RKRS) and 298–314 (RKKR…RHRS). Position 303 is a phosphothreonine (Thr303). 3 positions are modified to phosphoserine: Ser305, Ser307, and Arg310. Residues 315–330 (SSGSSHSGSRSSSKKK) are compositionally biased toward low complexity.

It belongs to the ZRANB2 family. As to quaternary structure, interacts with the C-terminal half of SNRNP70, the Arg/Ser-rich domain of AKAP17A as well as with U2AF1 and CLK1. Isoform 2 is phosphorylated on Ser-310 upon DNA damage, probably by ATM or ATR.

The protein resides in the nucleus. Splice factor required for alternative splicing of TRA2B/SFRS10 transcripts. Binds to ssRNA containing the consensus sequence 5'-AGGUAA-3'. May interfere with constitutive 5'-splice site selection. The polypeptide is Zinc finger Ran-binding domain-containing protein 2 (ZRANB2) (Homo sapiens (Human)).